We begin with the raw amino-acid sequence, 99 residues long: MLERLKAITNLLKGALEQRSRAEEGYIREEKVKEAIELLEALERDIMEKELKLAKEALEKFDSNRKFYYLVGKLYVEVSKEEAQKLIEDELKMFGGEGK.

Residues 3 to 68 are a coiled coil; that stretch reads ERLKAITNLL…EKFDSNRKFY (66 aa).

This is an uncharacterized protein from Aquifex aeolicus (strain VF5).